The primary structure comprises 315 residues: Olfactory receptor 2T5 (315 aa).

Residues 1-29 are Extracellular-facing; it reads MANITRMANHTGKLDFILMGLFRRSKHPA. N-linked (GlcNAc...) asparagine glycosylation is found at Asn-3 and Asn-9. The chain crosses the membrane as a helical span at residues 30–53; it reads LLSVVIFVVFLKALSGNAVLILLI. At 54-61 the chain is on the cytoplasmic side; it reads HCDAHLHS. Residues 62–83 traverse the membrane as a helical segment; the sequence is PMYFFISQLSLMDMAYISVTVP. Over 84–104 the chain is Extracellular; the sequence is KMLLDQVMGVNKVSAPECGMQ. An intrachain disulfide couples Cys-101 to Cys-193. The helical transmembrane segment at 105–124 threads the bilayer; the sequence is MFLYLTLAGSEFFLLATMAY. At 125-143 the chain is on the cytoplasmic side; sequence DRYVAICHPLRYPVLMNHR. The chain crosses the membrane as a helical span at residues 144–162; the sequence is VCLFLASGCWFLGSVDGFM. Residues 163–199 lie on the Extracellular side of the membrane; it reads LTPITMSFPFCRSWEIHHFFCEVPAVTILSCSDTSLY. Residues 200–223 traverse the membrane as a helical segment; that stretch reads ETLMYLCCVLMLLIPVTIISSSYL. The Cytoplasmic segment spans residues 224–240; it reads LILLTVHRMNSAEGRKK. A helical transmembrane segment spans residues 241-263; the sequence is AFATCSSHLTVVILFYGAAVYTY. Residues 264-276 lie on the Extracellular side of the membrane; that stretch reads MLPSSYHTPEKDM. A helical membrane pass occupies residues 277–296; sequence MVSVFYTILTPVLNPLIYSL. At 297-315 the chain is on the cytoplasmic side; that stretch reads RNKDVMGALKKMLTVRFVL.

Belongs to the G-protein coupled receptor 1 family.

It localises to the cell membrane. Its function is as follows. Odorant receptor. The chain is Olfactory receptor 2T5 (OR2T5) from Homo sapiens (Human).